We begin with the raw amino-acid sequence, 358 residues long: L-tryptophan methyltransferase trpM (358 aa).

This sequence belongs to the methyltransferase superfamily.

It carries out the reaction L-tryptophan + S-adenosyl-L-methionine = N(alpha)-methyl-L-tryptophan + S-adenosyl-L-homocysteine + H(+). The enzyme catalyses N(alpha)-methyl-L-tryptophan + S-adenosyl-L-methionine = N(alpha),N(alpha)-dimethyl-L-tryptophan + S-adenosyl-L-homocysteine + H(+). It catalyses the reaction N(alpha),N(alpha)-dimethyl-L-tryptophan + S-adenosyl-L-methionine = N(alpha),N(alpha),N(alpha)-trimethyl-L-tryptophan + S-adenosyl-L-homocysteine + H(+). Its function is as follows. Methyltransferase that catalyzes iterative L-tryptophan N-methylations to produce L-abrine (N-alpha-methyl-L-tryptophan) and N,N-alpha-dimethyl-L-tryptophan. Also catalyzes a third methylation to yield L-hypaphorine (N,N,N-alpha-trimethyl-L-tryptopan), an agonist of the phytohormone indole-3-acetic acid. Can also N-methylate the non-native amino acid substrate 4-hydroxytryptophan, but the ability to incorporate trpM into a functional psilocybin biosynthesis pathway is indeed thwarted by the inability of the L-tryptophan decarboxylase psiD to use N,N-dimethyl-4-hydroxytryptophan as substrate. The chain is L-tryptophan methyltransferase trpM from Psilocybe serbica.